Here is a 476-residue protein sequence, read N- to C-terminus: Proline dehydrogenase 2, mitochondrial (476 aa).

Residues 1-29 (MANRFLRPNLIHRFSTVSPVGPPTTIIPE) constitute a mitochondrion transit peptide.

This sequence belongs to the proline oxidase family. FAD is required as a cofactor. As to expression, expressed in the vascular tissue and in the abscission zone of petals, sepals, stamina, pistils and siliques. Not detected in petioles.

It localises to the mitochondrion. It carries out the reaction L-proline + a quinone = (S)-1-pyrroline-5-carboxylate + a quinol + H(+). Its pathway is amino-acid degradation; L-proline degradation into L-glutamate; L-glutamate from L-proline: step 1/2. Functionally, converts proline to delta-1-pyrroline-5-carboxylate. The sequence is that of Proline dehydrogenase 2, mitochondrial (POX2) from Arabidopsis thaliana (Mouse-ear cress).